The sequence spans 319 residues: DNA-directed RNA polymerases II, IV and V subunit 3 (319 aa).

The residue at position 1 (M1) is an N-acetylmethionine.

Belongs to the archaeal Rpo3/eukaryotic RPB3 RNA polymerase subunit family. Component of the RNA polymerase II complex consisting of at least 12 subunits. Interacts with SHH1, CLSY1, NRPB11 and NRPD1. Interacts with IYO.

Its subcellular location is the nucleus. DNA-dependent RNA polymerase catalyzes the transcription of DNA into RNA using the four ribonucleoside triphosphates as substrates. Component of RNA polymerase II which synthesizes mRNA precursors and many functional non-coding RNAs. Pol II is the central component of the basal RNA polymerase II transcription machinery. It is composed of mobile elements that move relative to each other. NRPB3 is part of the core element with the central large cleft and the clamp element that moves to open and close the cleft. Component of RNA polymerases IV and V which mediate short-interfering RNAs (siRNA) accumulation and subsequent RNA-directed DNA methylation-dependent (RdDM) transcriptional gene silencing (TGS) of endogenous repeated sequences, including transposable elements. In Arabidopsis thaliana (Mouse-ear cress), this protein is DNA-directed RNA polymerases II, IV and V subunit 3 (NRPB3).